Here is a 306-residue protein sequence, read N- to C-terminus: Curved DNA-binding protein (306 aa).

In terms of domain architecture, J spans 5-69; sequence DYYAIMGVKP…QRRAEYDQMW (65 aa).

The protein localises to the cytoplasm. It is found in the nucleoid. DNA-binding protein that preferentially recognizes a curved DNA sequence. It is probably a functional analog of DnaJ; displays overlapping activities with DnaJ, but functions under different conditions, probably acting as a molecular chaperone in an adaptive response to environmental stresses other than heat shock. Lacks autonomous chaperone activity; binds native substrates and targets them for recognition by DnaK. Its activity is inhibited by the binding of CbpM. The protein is Curved DNA-binding protein of Shigella flexneri.